Here is a 294-residue protein sequence, read N- to C-terminus: N-acetylmuramic acid 6-phosphate etherase (294 aa).

The region spanning 54–217 (VIKSFEEEGR…STASMIGVGK (164 aa)) is the SIS domain. Glu82 acts as the Proton donor in catalysis. Residue Glu113 is part of the active site.

Belongs to the GCKR-like family. MurNAc-6-P etherase subfamily. As to quaternary structure, homodimer.

It carries out the reaction N-acetyl-D-muramate 6-phosphate + H2O = N-acetyl-D-glucosamine 6-phosphate + (R)-lactate. Its pathway is amino-sugar metabolism; N-acetylmuramate degradation. In terms of biological role, specifically catalyzes the cleavage of the D-lactyl ether substituent of MurNAc 6-phosphate, producing GlcNAc 6-phosphate and D-lactate. This Bacillus cereus (strain G9842) protein is N-acetylmuramic acid 6-phosphate etherase.